A 442-amino-acid polypeptide reads, in one-letter code: Tubulin beta chain (442 aa).

GTP-binding residues include Q11, E69, S138, G142, T143, G144, N204, and N226. E69 contributes to the Mg(2+) binding site.

This sequence belongs to the tubulin family. As to quaternary structure, dimer of alpha and beta chains. A typical microtubule is a hollow water-filled tube with an outer diameter of 25 nm and an inner diameter of 15 nM. Alpha-beta heterodimers associate head-to-tail to form protofilaments running lengthwise along the microtubule wall with the beta-tubulin subunit facing the microtubule plus end conferring a structural polarity. Microtubules usually have 13 protofilaments but different protofilament numbers can be found in some organisms and specialized cells. Requires Mg(2+) as cofactor.

It is found in the cytoplasm. Its subcellular location is the cytoskeleton. Its function is as follows. Tubulin is the major constituent of microtubules, a cylinder consisting of laterally associated linear protofilaments composed of alpha- and beta-tubulin heterodimers. Microtubules grow by the addition of GTP-tubulin dimers to the microtubule end, where a stabilizing cap forms. Below the cap, tubulin dimers are in GDP-bound state, owing to GTPase activity of alpha-tubulin. This is Tubulin beta chain (TUB-B) from Pneumocystis carinii.